The sequence spans 311 residues: Prohibitin-2 (311 aa).

A helical transmembrane segment spans residues 39 to 57; that stretch reads GAGMGLAGLVLLGGAAFVA. An AIM motif is present at residues 141-144; the sequence is YRTL.

Belongs to the prohibitin family. As to quaternary structure, the mitochondrial prohibitin complex consists of two subunits (PHB1 and PHB2). The subunits assemble into a membrane-associated ring-shaped supercomplex of approximately 1 mDa. Interacts with ATG24/SNX4; the interaction is direct and plays a role in mitophagy.

It is found in the mitochondrion inner membrane. Its function is as follows. Prohibitin probably acts as a holdase/unfoldase for the stabilization of newly synthesized mitochondrial proteins. Involved in mitophagy. Required for the switch to necrotrophic growth. This Colletotrichum higginsianum (strain IMI 349063) (Crucifer anthracnose fungus) protein is Prohibitin-2.